A 331-amino-acid chain; its full sequence is Pantothenate kinase (331 aa).

An ATP-binding site is contributed by 109–116 (GSVAVGKS).

This sequence belongs to the prokaryotic pantothenate kinase family.

The protein localises to the cytoplasm. It catalyses the reaction (R)-pantothenate + ATP = (R)-4'-phosphopantothenate + ADP + H(+). The protein operates within cofactor biosynthesis; coenzyme A biosynthesis; CoA from (R)-pantothenate: step 1/5. This Rhizobium meliloti (strain 1021) (Ensifer meliloti) protein is Pantothenate kinase.